Reading from the N-terminus, the 238-residue chain is NEDD4-binding protein 2-like 1 (238 aa).

Disordered stretches follow at residues 1–36 (MEDSFLESFGRLSLQQRQQQPPPRPPPARGPPPRRH) and 183–212 (VLHAEKPSRANRNQGRNSEPSSGSGYWNTY). The span at 20–31 (QPPPRPPPARGP) shows a compositional bias: pro residues. The segment covering 192–212 (ANRNQGRNSEPSSGSGYWNTY) has biased composition (polar residues).

As to quaternary structure, interacts with dynactin subunit proteins, including DCTN4, DCTN5 and DCTN5.

Functionally, might play a role in adipocyte differentiation and triglyceride accumulation. This Mus musculus (Mouse) protein is NEDD4-binding protein 2-like 1 (N4bp2l1).